Consider the following 264-residue polypeptide: 3-dehydroquinate dehydratase (264 aa).

Residues 50 to 52 (EWR) and arginine 86 contribute to the 3-dehydroquinate site. The active-site Proton donor/acceptor is the histidine 148. Lysine 175 acts as the Schiff-base intermediate with substrate in catalysis. 3-dehydroquinate contacts are provided by arginine 217, serine 236, and glutamine 240.

The protein belongs to the type-I 3-dehydroquinase family. In terms of assembly, homodimer.

It catalyses the reaction 3-dehydroquinate = 3-dehydroshikimate + H2O. It participates in metabolic intermediate biosynthesis; chorismate biosynthesis; chorismate from D-erythrose 4-phosphate and phosphoenolpyruvate: step 3/7. In terms of biological role, involved in the third step of the chorismate pathway, which leads to the biosynthesis of aromatic amino acids. Catalyzes the cis-dehydration of 3-dehydroquinate (DHQ) and introduces the first double bond of the aromatic ring to yield 3-dehydroshikimate. This chain is 3-dehydroquinate dehydratase, found in Albidiferax ferrireducens (strain ATCC BAA-621 / DSM 15236 / T118) (Rhodoferax ferrireducens).